The sequence spans 763 residues: Cyclin-F (763 aa).

Positions 19-27 match the Nuclear localization signal 1 motif; sequence KRRVKRRPR. An F-box domain is found at 28–75; it reads VLTLLSLPEDVLLYVLECLPAVDILSMREVHPHLRSLVDSHSSVWARA. A Cyclin N-terminal domain is found at 299–411; it reads INKTSIFTTQ…EIISALEGKI (113 aa). Short sequence motifs (d box) lie at residues 316–319 and 355–358; these read RYIL and RAKL. Disordered regions lie at residues 574–600 and 677–763; these read GSKT…TAEL and KLEN…SDEL. The Nuclear localization signal 2 motif lies at 575–581; that stretch reads SKTKRRR. Over residues 580-590 the composition is skewed to basic and acidic residues; the sequence is RREDSIQEDRG. The interval 589 to 747 is PEST; sequence RGSFVTTPTA…LFKASRRQVK (159 aa). A compositionally biased stretch (low complexity) spans 692–710; it reads SSGYSSVSSGGSPTSSSSP. Residues 741-751 show a composition bias toward basic residues; sequence ASRRQVKRKNQ.

Belongs to the cyclin family. Cyclin AB subfamily. Component of the SCF(CCNF) complex.

The protein localises to the nucleus. The protein resides in the cytoplasm. Its subcellular location is the perinuclear region. It localises to the cytoskeleton. It is found in the microtubule organizing center. The protein localises to the centrosome. The protein resides in the centriole. In terms of biological role, substrate recognition component of the SCF(CCNF) E3 ubiquitin-protein ligase complex which mediates the ubiquitination and subsequent proteasomal degradation of target proteins. The SCF(CCNF) E3 ubiquitin-protein ligase complex is an integral component of the ubiquitin proteasome system (UPS) and links proteasome degradation to the cell cycle. Mediates the substrate recognition and the proteasomal degradation of various target proteins during G2 phase involved in the regulation of cell cycle progression and in the maintenance of genome stability. In Xenopus tropicalis (Western clawed frog), this protein is Cyclin-F (ccnf).